A 194-amino-acid polypeptide reads, in one-letter code: Imidazoleglycerol-phosphate dehydratase (194 aa).

This sequence belongs to the imidazoleglycerol-phosphate dehydratase family.

Its subcellular location is the cytoplasm. The catalysed reaction is D-erythro-1-(imidazol-4-yl)glycerol 3-phosphate = 3-(imidazol-4-yl)-2-oxopropyl phosphate + H2O. It functions in the pathway amino-acid biosynthesis; L-histidine biosynthesis; L-histidine from 5-phospho-alpha-D-ribose 1-diphosphate: step 6/9. This chain is Imidazoleglycerol-phosphate dehydratase, found in Streptococcus thermophilus (strain ATCC BAA-491 / LMD-9).